A 206-amino-acid chain; its full sequence is Ribosomal RNA large subunit methyltransferase E (206 aa).

The S-adenosyl-L-methionine site is built by Gly60, Trp62, Asp80, Asp96, and Asp121. The active-site Proton acceptor is the Lys161.

The protein belongs to the class I-like SAM-binding methyltransferase superfamily. RNA methyltransferase RlmE family.

It is found in the cytoplasm. It catalyses the reaction uridine(2552) in 23S rRNA + S-adenosyl-L-methionine = 2'-O-methyluridine(2552) in 23S rRNA + S-adenosyl-L-homocysteine + H(+). In terms of biological role, specifically methylates the uridine in position 2552 of 23S rRNA at the 2'-O position of the ribose in the fully assembled 50S ribosomal subunit. This is Ribosomal RNA large subunit methyltransferase E from Nitrosospira multiformis (strain ATCC 25196 / NCIMB 11849 / C 71).